The chain runs to 483 residues: Cobyric acid synthase (483 aa).

A GATase cobBQ-type domain is found at 251–438 (ALIVAVPMLP…LHGVFSADRF (188 aa)). Cys-333 (nucleophile) is an active-site residue. The active site involves His-430.

This sequence belongs to the CobB/CobQ family. CobQ subfamily.

It participates in cofactor biosynthesis; adenosylcobalamin biosynthesis. Its function is as follows. Catalyzes amidations at positions B, D, E, and G on adenosylcobyrinic A,C-diamide. NH(2) groups are provided by glutamine, and one molecule of ATP is hydrogenolyzed for each amidation. The sequence is that of Cobyric acid synthase from Brucella canis (strain ATCC 23365 / NCTC 10854 / RM-666).